A 50-amino-acid chain; its full sequence is Bacterioferritin (50 aa).

Positions M1–E50 constitute a Ferritin-like diiron domain. Residue E18 coordinates Fe cation.

This sequence belongs to the bacterioferritin family. Homooligomer of 24 subunits, arranged as 12 dimers, that are packed together to form an approximately spherical molecule with a central cavity, in which large amounts of iron can be deposited. Heme b is required as a cofactor.

The catalysed reaction is 4 Fe(2+) + O2 + 4 H(+) = 4 Fe(3+) + 2 H2O. The enzyme catalyses Fe(2+)(in) = Fe(2+)(out). Iron-storage protein, whose ferroxidase center binds Fe(2+), oxidizes it using dioxygen to Fe(3+), and participates in the subsequent Fe(3+) oxide mineral core formation within the central cavity of the BFR protein shell. In terms of biological role, may act as one of the electron carriers in the reverse electron-transport system from cytochrome c-552 to NADP(+). In Nitrobacter winogradskyi (Nitrobacter agilis), this protein is Bacterioferritin (bfr).